The primary structure comprises 207 residues: Large ribosomal subunit protein uL4 (207 aa).

The interval H49–I78 is disordered.

This sequence belongs to the universal ribosomal protein uL4 family. As to quaternary structure, part of the 50S ribosomal subunit.

Its function is as follows. One of the primary rRNA binding proteins, this protein initially binds near the 5'-end of the 23S rRNA. It is important during the early stages of 50S assembly. It makes multiple contacts with different domains of the 23S rRNA in the assembled 50S subunit and ribosome. Functionally, forms part of the polypeptide exit tunnel. In Streptococcus thermophilus (strain CNRZ 1066), this protein is Large ribosomal subunit protein uL4.